A 450-amino-acid chain; its full sequence is Deoxyguanosinetriphosphate triphosphohydrolase-like protein (450 aa).

The HD domain occupies 61-201 (RLTHSLEVAQ…AKLAPELNAD (141 aa)).

The protein belongs to the dGTPase family. Type 2 subfamily.

This is Deoxyguanosinetriphosphate triphosphohydrolase-like protein from Pasteurella multocida (strain Pm70).